We begin with the raw amino-acid sequence, 490 residues long: Auxin transporter-like protein 5 (490 aa).

Over 1 to 55 the chain is Cytoplasmic; sequence MEMANDKVAETVIVGNYVEMESEGKPPQDIKSKLSNFLWHGGSAYDAWFSCASNQ. A helical membrane pass occupies residues 56–73; the sequence is VAQVLLTLPYSFSQLGML. Residues 74-75 lie on the Extracellular side of the membrane; sequence SG. Residues 76-96 form a helical membrane-spanning segment; that stretch reads ILFQLFYGILGSWTAYLISIL. The Cytoplasmic segment spans residues 97–132; the sequence is YVEYRTRKEREKVNFRSHVIQWFEVLDGLLGKHWRN. The chain crosses the membrane as a helical span at residues 133-153; the sequence is VGLGFNCTFLLFGSVIQLIAC. Residues 154–168 are Extracellular-facing; sequence ASNIYYINDNLDKRT. The chain crosses the membrane as a helical span at residues 169–189; sequence WTYIFGACCATTVFIPSFHNY. R190 is a topological domain (cytoplasmic). A helical transmembrane segment spans residues 191–211; that stretch reads IWSFLGLVMTTYTAWYLTIAA. Over 212-227 the chain is Extracellular; it reads VLHGQVEGVKHSGPNK. Residues 228–248 form a helical membrane-spanning segment; that stretch reads IILYFTGATNILYTFGGHAVT. Residues 249–262 lie on the Cytoplasmic side of the membrane; the sequence is VEIMHAMWKPQKFK. Residues 263–283 form a helical membrane-spanning segment; it reads AIYLLATLYVLTLTIPSATAV. The Extracellular portion of the chain corresponds to 284 to 310; that stretch reads YWAFGDMLLNHSNAFALLPKSPFRDMA. Residue N293 is glycosylated (N-linked (GlcNAc...) asparagine). Residues 311–331 traverse the membrane as a helical segment; it reads VILMLIHQFITFGFACTPLYF. At 332–352 the chain is on the cytoplasmic side; that stretch reads VWEKTVGMHECKSLCKRALVR. A helical transmembrane segment spans residues 353-373; it reads LPVVIPIWFLAIIFPFFGPIN. The Extracellular segment spans residues 374-376; the sequence is STV. A helical membrane pass occupies residues 377–397; it reads GSLLVSFTVYIIPALAHIFTF. At 398 to 420 the chain is on the cytoplasmic side; it reads KSSSARQNAVEQPPKFVGRWVGT. A helical transmembrane segment spans residues 421–441; the sequence is FVINVFIVVWVLIVGFGFGGW. Residues 442-490 are Extracellular-facing; it reads ASMVNFVHQIDTFGLFTKCYQCPPPTPSVPTMPPHQMNATAPSPHHHHH. An N-linked (GlcNAc...) asparagine glycan is attached at N479.

It belongs to the amino acid/polyamine transporter 2 family. Amino acid/auxin permease (AAAP) (TC 2.A.18.1) subfamily. Shoots and roots of nodulating plants, at low levels.

The protein resides in the cell membrane. In terms of biological role, carrier protein involved in proton-driven auxin influx. Mediates the formation of auxin gradient from developing leaves (site of auxin biosynthesis) to tips by contributing to the loading of auxin in vascular tissues and facilitating acropetal (base to tip) auxin transport within inner tissues of the root apex, and basipetal (tip to base) auxin transport within outer tissues of the root apex. May be involved in lateral roots and nodules formation. This is Auxin transporter-like protein 5 (LAX5) from Medicago truncatula (Barrel medic).